Consider the following 178-residue polypeptide: ATP-dependent protease subunit HslV (178 aa).

Thr7 is a catalytic residue. Residues Gly162, Cys165, and Thr168 each contribute to the Na(+) site.

Belongs to the peptidase T1B family. HslV subfamily. As to quaternary structure, a double ring-shaped homohexamer of HslV is capped on each side by a ring-shaped HslU homohexamer. The assembly of the HslU/HslV complex is dependent on binding of ATP.

The protein localises to the cytoplasm. The catalysed reaction is ATP-dependent cleavage of peptide bonds with broad specificity.. Its activity is regulated as follows. Allosterically activated by HslU binding. Protease subunit of a proteasome-like degradation complex believed to be a general protein degrading machinery. The protein is ATP-dependent protease subunit HslV of Burkholderia multivorans (strain ATCC 17616 / 249).